The chain runs to 1295 residues: Phosphoribosylformylglycinamidine synthase (1295 aa).

Residues W305–K327 are disordered. Residues G307–D318 and A678 contribute to the ATP site. E718, N722, and D884 together coordinate Mg(2+). Residue S886 participates in ATP binding. The region spanning V1042–G1295 is the Glutamine amidotransferase type-1 domain. The active-site Nucleophile is C1135. Catalysis depends on residues H1260 and E1262.

The protein in the N-terminal section; belongs to the FGAMS family. As to quaternary structure, monomer. Post-translationally, both N-terminus methionine truncation and retention have been observed for this protein.

The protein localises to the cytoplasm. The catalysed reaction is N(2)-formyl-N(1)-(5-phospho-beta-D-ribosyl)glycinamide + L-glutamine + ATP + H2O = 2-formamido-N(1)-(5-O-phospho-beta-D-ribosyl)acetamidine + L-glutamate + ADP + phosphate + H(+). The protein operates within purine metabolism; IMP biosynthesis via de novo pathway; 5-amino-1-(5-phospho-D-ribosyl)imidazole from N(2)-formyl-N(1)-(5-phospho-D-ribosyl)glycinamide: step 1/2. In terms of biological role, phosphoribosylformylglycinamidine synthase involved in the purines biosynthetic pathway. Catalyzes the ATP-dependent conversion of formylglycinamide ribonucleotide (FGAR) and glutamine to yield formylglycinamidine ribonucleotide (FGAM) and glutamate. In Escherichia coli (strain K12), this protein is Phosphoribosylformylglycinamidine synthase.